The following is a 317-amino-acid chain: Apolipoprotein E (317 aa).

An N-terminal signal peptide occupies residues 1–18 (MKVLWAALLVTFLAGCQA). Repeat copies occupy residues 80–101 (TLMD…EQLS), 102–123 (PVAE…ARLG), 124–145 (ADME…AMLG), 146–167 (QSTE…KRLL), 168–189 (RDAD…EGAE), 190–211 (RGVS…VRAA), 212–233 (TVGS…ERLR), and 234–255 (ARME…EQVA). The segment at 80–255 (TLMDETMKEL…RLDEVKEQVA (176 aa)) is 8 X 22 AA approximate tandem repeats. Methionine 143 carries the post-translational modification Methionine sulfoxide. A Phosphoserine modification is found at serine 147. Residues 158-168 (HLRKLRKRLLR) are LDL and other lipoprotein receptors binding. 162–165 (LRKR) lines the heparin pocket. The tract at residues 210–290 (AATVGSLASQ…SWFEPLVEDM (81 aa)) is lipid-binding and lipoprotein association. 229 to 236 (GERLRARM) contacts heparin. The segment at 266–317 (QQISLQAEAFQARLKSWFEPLVEDMQRQWAGLVEKVQAAVGASTAPVPSDNH) is homooligomerization. The specificity for association with VLDL stretch occupies residues 278–290 (RLKSWFEPLVEDM).

It belongs to the apolipoprotein A1/A4/E family. As to quaternary structure, homotetramer. May interact with ABCA1; functionally associated with ABCA1 in the biogenesis of HDLs. May interact with APP/A4 amyloid-beta peptide; the interaction is extremely stable in vitro but its physiological significance is unclear. May interact with MAPT. May interact with MAP2. In the cerebrospinal fluid, interacts with secreted SORL1. Interacts with PMEL; this allows the loading of PMEL luminal fragment on ILVs to induce fibril nucleation. APOE exists as multiple glycosylated and sialylated glycoforms within cells and in plasma. The extent of glycosylation and sialylation are tissue and context specific. Post-translationally, glycated in plasma VLDL. In terms of processing, phosphorylated by FAM20C in the extracellular medium.

The protein localises to the secreted. The protein resides in the extracellular space. It is found in the extracellular matrix. Its subcellular location is the extracellular vesicle. It localises to the endosome. The protein localises to the multivesicular body. In terms of biological role, APOE is an apolipoprotein, a protein associating with lipid particles, that mainly functions in lipoprotein-mediated lipid transport between organs via the plasma and interstitial fluids. APOE is a core component of plasma lipoproteins and is involved in their production, conversion and clearance. Apolipoproteins are amphipathic molecules that interact both with lipids of the lipoprotein particle core and the aqueous environment of the plasma. As such, APOE associates with chylomicrons, chylomicron remnants, very low density lipoproteins (VLDL) and intermediate density lipoproteins (IDL) but shows a preferential binding to high-density lipoproteins (HDL). It also binds a wide range of cellular receptors including the LDL receptor/LDLR, the LDL receptor-related proteins LRP1, LRP2 and LRP8 and the very low-density lipoprotein receptor/VLDLR that mediate the cellular uptake of the APOE-containing lipoprotein particles. Finally, APOE also has a heparin-binding activity and binds heparan-sulfate proteoglycans on the surface of cells, a property that supports the capture and the receptor-mediated uptake of APOE-containing lipoproteins by cells. A main function of APOE is to mediate lipoprotein clearance through the uptake of chylomicrons, VLDLs, and HDLs by hepatocytes. APOE is also involved in the biosynthesis by the liver of VLDLs as well as their uptake by peripheral tissues ensuring the delivery of triglycerides and energy storage in muscle, heart and adipose tissues. By participating in the lipoprotein-mediated distribution of lipids among tissues, APOE plays a critical role in plasma and tissues lipid homeostasis. APOE is also involved in two steps of reverse cholesterol transport, the HDLs-mediated transport of cholesterol from peripheral tissues to the liver, and thereby plays an important role in cholesterol homeostasis. First, it is functionally associated with ABCA1 in the biogenesis of HDLs in tissues. Second, it is enriched in circulating HDLs and mediates their uptake by hepatocytes. APOE also plays an important role in lipid transport in the central nervous system, regulating neuron survival and sprouting. The polypeptide is Apolipoprotein E (APOE) (Theropithecus gelada (Gelada baboon)).